Here is a 908-residue protein sequence, read N- to C-terminus: Protein O-mannosyltransferase 1 (908 aa).

Disordered regions lie at residues 1 to 85 and 115 to 160; these read MYNN…SAIN and GSVE…SGSR. Basic residues predominate over residues 21–31; the sequence is QRRKTTTRSRS. Composition is skewed to polar residues over residues 39–54 and 132–149; these read CTSE…NGAQ and LTAT…SPTI. Residues 190-210 traverse the membrane as a helical segment; it reads FTVNLSIDLFSWTLFLLAFCT. Asn-265 is a glycosylation site (N-linked (GlcNAc...) asparagine). The next 5 membrane-spanning stretches (helical) occupy residues 279–299, 311–328, 331–351, 370–390, and 418–438; these read VPIF…APAV, WAAA…SLLT, RFVL…ACLL, AGVL…ALAL, and LSRL…VFYV. MIR domains lie at 473 to 534, 545 to 602, and 608 to 664; these read PLAV…VKRP, PDVI…VEIL, and GDSW…VEEH. Transmembrane regions (helical) follow at residues 749–769, 788–808, 813–833, and 857–877; these read VLIW…LAFY, FLMA…PYYF, LFLH…CFVV, and LALL…LPLS.

Belongs to the glycosyltransferase 39 family. As to quaternary structure, interacts with tw/POMT2.

Its subcellular location is the endoplasmic reticulum membrane. It carries out the reaction a di-trans,poly-cis-dolichyl beta-D-mannosyl phosphate + L-seryl-[protein] = 3-O-(alpha-D-mannosyl)-L-seryl-[protein] + a di-trans,poly-cis-dolichyl phosphate + H(+). It catalyses the reaction a di-trans,poly-cis-dolichyl beta-D-mannosyl phosphate + L-threonyl-[protein] = 3-O-(alpha-D-mannosyl)-L-threonyl-[protein] + a di-trans,poly-cis-dolichyl phosphate + H(+). It functions in the pathway protein modification; protein glycosylation. In terms of biological role, rt/POMT1 and tw/POMT2 function as a protein O-mannosyltransferase in association with each other to generate and maintain normal muscle development. This chain is Protein O-mannosyltransferase 1, found in Drosophila pseudoobscura pseudoobscura (Fruit fly).